Here is a 684-residue protein sequence, read N- to C-terminus: Early phosphoprotein p84 (684 aa).

Disordered stretches follow at residues 166–301 (LGGS…MSLP), 317–336 (SSAV…HHNA), 357–393 (VVSS…AAAT), 407–452 (RAPA…SPRF), and 569–657 (SNSS…GPSF). Residues 180–191 (EQQRRRQEQRHE) show a composition bias toward basic and acidic residues. Residues 201–220 (AGGGGGGGASGGGGGGGSGG) are compositionally biased toward gly residues. Basic and acidic residues-rich tracts occupy residues 232 to 245 (RDPR…ERRP) and 258 to 272 (REAK…HEGH). The Nuclear localization signal motif lies at 261 to 264 (KRQK). Over residues 285–296 (GGAGGGGGGGSG) the composition is skewed to gly residues. The segment covering 326-335 (NHHHHHHHHN) has biased composition (basic residues). Residues 359 to 377 (SSPSSTSPSSLLSLPRPSS) are compositionally biased toward low complexity. Over residues 425–442 (STTPVSNCRVPPNSQESA) the composition is skewed to polar residues. Residues 578–587 (PLPPPPPPPG) are compositionally biased toward pro residues. Over residues 598 to 608 (RGGGGGGGGGR) the composition is skewed to gly residues. Residues 612–622 (RQAASSSSSSS) are compositionally biased toward low complexity.

It belongs to the herpesviridae U79/UL112 family. As to quaternary structure, isoforms 1, 2, 3 and 4 interacts with themselves and with each other via their shared N-terminal regions; these interactions are important to both their intranuclear targeting and the recruitment of UL44 to subnuclear sites for viral replication.

The protein localises to the host nucleus. The protein resides in the virion. Its function is as follows. Needed for efficient replication. Recruits the DNA polymerase processivity factor to pre-replication foci. This chain is Early phosphoprotein p84 (UL112/UL113), found in Homo sapiens (Human).